A 438-amino-acid polypeptide reads, in one-letter code: EF-hand calcium-binding domain-containing protein 3 (438 aa).

2 EF-hand domains span residues 47-82 (SQMRAFQDAYNFFNKDKTGCIDLHGMMCTLAKLGMN) and 83-118 (LTKHDVHNELRCADIDQDGKVNFSDFLKVLTDKNRF). D96, D98, D100, K102, and D107 together coordinate Ca(2+). The residue at position 279 (Y279) is a Phosphotyrosine. Residues 413 to 438 (SSSDISECDTDTGRKRKRKGFKGFRQ) form a disordered region. Residues 426–438 (RKRKRKGFKGFRQ) show a composition bias toward basic residues.

In Bos taurus (Bovine), this protein is EF-hand calcium-binding domain-containing protein 3 (EFCAB3).